Here is an 849-residue protein sequence, read N- to C-terminus: Probable ubiquitin carboxyl-terminal hydrolase 1 (849 aa).

The 101-residue stretch at 20-120 folds into the DUSP domain; the sequence is QPASLPFQDS…EGLAIERKVL (101 aa). One can recognise a USP domain in the interval 279 to 848; the sequence is CGLYNLGNSC…SAYVLFYRAK (570 aa). C288 serves as the catalytic Nucleophile. The active-site Proton acceptor is H806.

This sequence belongs to the peptidase C19 family.

It carries out the reaction Thiol-dependent hydrolysis of ester, thioester, amide, peptide and isopeptide bonds formed by the C-terminal Gly of ubiquitin (a 76-residue protein attached to proteins as an intracellular targeting signal).. The chain is Probable ubiquitin carboxyl-terminal hydrolase 1 (ubp1) from Schizosaccharomyces pombe (strain 972 / ATCC 24843) (Fission yeast).